The following is a 340-amino-acid chain: Phosphate acyltransferase (340 aa).

It belongs to the PlsX family. Homodimer. Probably interacts with PlsY.

Its subcellular location is the cytoplasm. The catalysed reaction is a fatty acyl-[ACP] + phosphate = an acyl phosphate + holo-[ACP]. It functions in the pathway lipid metabolism; phospholipid metabolism. In terms of biological role, catalyzes the reversible formation of acyl-phosphate (acyl-PO(4)) from acyl-[acyl-carrier-protein] (acyl-ACP). This enzyme utilizes acyl-ACP as fatty acyl donor, but not acyl-CoA. The protein is Phosphate acyltransferase of Leptospira biflexa serovar Patoc (strain Patoc 1 / ATCC 23582 / Paris).